A 406-amino-acid chain; its full sequence is Elongation factor Ts, mitochondrial (406 aa).

A disordered region spans residues 387 to 406 (ARPSDETSFADQVKEAAGLA).

Belongs to the EF-Ts family.

Its subcellular location is the mitochondrion. Its function is as follows. Associates with the EF-Tu.GDP complex and induces the exchange of GDP to GTP. It remains bound to the aminoacyl-tRNA.EF-Tu.GTP complex up to the GTP hydrolysis stage on the ribosome. This is Elongation factor Ts, mitochondrial from Malassezia globosa (strain ATCC MYA-4612 / CBS 7966) (Dandruff-associated fungus).